The following is a 361-amino-acid chain: Chorismate synthase (361 aa).

2 residues coordinate NADP(+): Arg48 and Arg54. FMN contacts are provided by residues 125–127 (RSS), 238–239 (NA), Gly278, 293–297 (KPTSS), and Arg319.

The protein belongs to the chorismate synthase family. As to quaternary structure, homotetramer. FMNH2 serves as cofactor.

It catalyses the reaction 5-O-(1-carboxyvinyl)-3-phosphoshikimate = chorismate + phosphate. It participates in metabolic intermediate biosynthesis; chorismate biosynthesis; chorismate from D-erythrose 4-phosphate and phosphoenolpyruvate: step 7/7. Its function is as follows. Catalyzes the anti-1,4-elimination of the C-3 phosphate and the C-6 proR hydrogen from 5-enolpyruvylshikimate-3-phosphate (EPSP) to yield chorismate, which is the branch point compound that serves as the starting substrate for the three terminal pathways of aromatic amino acid biosynthesis. This reaction introduces a second double bond into the aromatic ring system. The polypeptide is Chorismate synthase (Citrobacter koseri (strain ATCC BAA-895 / CDC 4225-83 / SGSC4696)).